A 425-amino-acid polypeptide reads, in one-letter code: Dihydroorotase (425 aa).

2 residues coordinate Zn(2+): histidine 56 and histidine 58. Substrate contacts are provided by residues 58 to 60 and asparagine 90; that span reads HYR. Zn(2+) contacts are provided by aspartate 148, histidine 175, and histidine 228. Asparagine 274 provides a ligand contact to substrate. Position 301 (aspartate 301) interacts with Zn(2+). Aspartate 301 is an active-site residue. Residues histidine 305 and 319 to 320 contribute to the substrate site; that span reads FG.

The protein belongs to the metallo-dependent hydrolases superfamily. DHOase family. Class I DHOase subfamily. The cofactor is Zn(2+).

The enzyme catalyses (S)-dihydroorotate + H2O = N-carbamoyl-L-aspartate + H(+). The protein operates within pyrimidine metabolism; UMP biosynthesis via de novo pathway; (S)-dihydroorotate from bicarbonate: step 3/3. In terms of biological role, catalyzes the reversible cyclization of carbamoyl aspartate to dihydroorotate. The polypeptide is Dihydroorotase (Lactobacillus delbrueckii subsp. bulgaricus (strain ATCC 11842 / DSM 20081 / BCRC 10696 / JCM 1002 / NBRC 13953 / NCIMB 11778 / NCTC 12712 / WDCM 00102 / Lb 14)).